Reading from the N-terminus, the 385-residue chain is ATP phosphoribosyltransferase regulatory subunit (385 aa).

Belongs to the class-II aminoacyl-tRNA synthetase family. HisZ subfamily. In terms of assembly, heteromultimer composed of HisG and HisZ subunits.

Its subcellular location is the cytoplasm. It functions in the pathway amino-acid biosynthesis; L-histidine biosynthesis; L-histidine from 5-phospho-alpha-D-ribose 1-diphosphate: step 1/9. In terms of biological role, required for the first step of histidine biosynthesis. May allow the feedback regulation of ATP phosphoribosyltransferase activity by histidine. The polypeptide is ATP phosphoribosyltransferase regulatory subunit (Lysinibacillus sphaericus (strain C3-41)).